A 91-amino-acid polypeptide reads, in one-letter code: uncharacterized protein (91 aa).

This is an uncharacterized protein from Rickettsia prowazekii (strain Madrid E).